A 283-amino-acid chain; its full sequence is Shikimate kinase (283 aa).

Residue Pro-86–Ala-96 coordinates ATP.

This sequence belongs to the GHMP kinase family. Archaeal shikimate kinase subfamily.

It localises to the cytoplasm. The catalysed reaction is shikimate + ATP = 3-phosphoshikimate + ADP + H(+). The protein operates within metabolic intermediate biosynthesis; chorismate biosynthesis; chorismate from D-erythrose 4-phosphate and phosphoenolpyruvate: step 5/7. The sequence is that of Shikimate kinase from Methanococcus maripaludis (strain C6 / ATCC BAA-1332).